Here is a 335-residue protein sequence, read N- to C-terminus: MTNSSEFTDVLQSRDPCVSNGIVINIDPIDPEPTPIRKEFTCEDTFHHEHHGNSEGFKTLTAFLCLMLSAFLNFFLLTVIHDVVPRQPLPDLTFMIIPQQRWAWSVGDVLSTVSSVVAFTIIFLHHQRWIVLRRTFLLGAIMYGLRAVILGVTFLPPSFHNRDEICQPQVNRTAMYGMEIATRFLTYVITLGLTSGQDKILCGDLMFSGHTVVLTIMYFVQLQYTPRGLVILRYIAAPITFLGIAALVVSGGHYTMDVLIAYWLTSHVFWSYHQIFEMRKDDRPQAPLSRLWWFWLCYWFESDVADGKLVNKWNWPLEGPQRMHTIMNRINYKLQ.

Helical transmembrane passes span 60–80, 104–124, 136–156, 200–220, and 229–249; these read LTAF…LTVI, WSVG…IIFL, FLLG…TFLP, ILCG…MYFV, and LVIL…ALVV. The active site involves H210. Residues H253 and D257 contribute to the active site. Residues 258–278 traverse the membrane as a helical segment; that stretch reads VLIAYWLTSHVFWSYHQIFEM. The Cytoplasmic portion of the chain corresponds to 279–335; the sequence is RKDDRPQAPLSRLWWFWLCYWFESDVADGKLVNKWNWPLEGPQRMHTIMNRINYKLQ.

It belongs to the sphingomyelin synthase family.

It is found in the membrane. It catalyses the reaction an N-acylsphing-4-enine + a 1,2-diacyl-sn-glycero-3-phosphocholine = a sphingomyelin + a 1,2-diacyl-sn-glycerol. The catalysed reaction is an N-acyl-15-methylhexadecasphing-4-enine + a 1,2-diacyl-sn-glycero-3-phosphocholine = an N-acyl-15-methylhexadecasphing-4-enine-1-phosphocholine + a 1,2-diacyl-sn-glycerol. It functions in the pathway lipid metabolism; sphingolipid metabolism. Sphingomyelin synthases (SM synthase or SMS) synthesize the sphingolipid sphingomyelin (SM) through transfer of the phosphatidyl head group of 1,2-diacyl-sn-glycero-3-phosphocholine (phosphatidylcholine, PC) on to the primary hydroxyl of ceramide (N-acylsphingoid base), yielding 1,2-diacyl-sn-glycerol (diacylglycerol, DAG) as a side product. Functions as a bidirectional lipid cholinephosphotransferases capable of converting PC and ceramide to SM and DAG and vice versa depending on the respective levels of ceramide and DAG as phosphocholine acceptors, respectively. The sequence is that of Phosphatidylcholine:ceramide cholinephosphotransferase 2 (sms-2) from Caenorhabditis elegans.